Consider the following 363-residue polypeptide: 2,5-diketocamphane 1,2-monooxygenase 2 (363 aa).

FMN-binding positions include methionine 74 and threonine 186 to serine 194.

Belongs to the bacterial luciferase oxidoreductase family. Homodimer. Likely forms a loose transient complex with a P.putida flavin reductase that provides the required FMNH(2) to the enzyme.

It carries out the reaction (1R,4R)-bornane-2,5-dione + FMNH2 + O2 = (1R,4R)-5-oxo-1,2-campholide + FMN + H2O + H(+). Its pathway is terpene metabolism; (R)-camphor degradation. Its function is as follows. Involved in the degradation and assimilation of (+)-camphor, which allows P.putida strain NCIMB 10007 to grow on this enantiomer of camphor as the sole carbon source. Catalyzes the FMNH(2)-dependent lactonization of 2,5-diketocamphane via a Baeyer-Villiger oxidation to produce the unstable lactone 5-oxo-1,2-campholide with (R,R) configuration, that presumably undergoes spontaneous hydrolysis to form 2-oxo-Delta(3)-4,5,5-trimethylcyclopentenylacetate. Is also able to convert (+)-camphor and norcamphor to the corresponding lactone in vitro. Shows no conversion of (-)-camphor, (+)-fenchone, (-)-fenchone, and (+)-nopinone. Acts on other bicyclic ketones and, to a lesser extent, on some 2- and 4-substituted monocyclic ketones. This chain is 2,5-diketocamphane 1,2-monooxygenase 2, found in Pseudomonas putida (Arthrobacter siderocapsulatus).